The chain runs to 266 residues: N-acetyltransferase ECO1 (266 aa).

The CCHH-type zinc finger occupies 31–55 (KKCTECQMSYIIDSPADCAEHKKYH). The N-acetyltransferase domain maps to 108-266 (TPGKTAEVKA…SGELLIPCYI (159 aa)).

This sequence belongs to the acetyltransferase family. ECO subfamily.

It localises to the nucleus. Functionally, probable acetyltransferase required for the establishment of sister chromatid cohesion and couple the processes of cohesion and DNA replication to ensure that only sister chromatids become paired together. In contrast to the structural cohesins, the deposition and establishment factors are required only during S phase. Acts by acetylating the cohesin complex component SMC3. This Eremothecium gossypii (strain ATCC 10895 / CBS 109.51 / FGSC 9923 / NRRL Y-1056) (Yeast) protein is N-acetyltransferase ECO1 (ECO1).